Here is a 270-residue protein sequence, read N- to C-terminus: Type III pantothenate kinase (270 aa).

11–18 is a binding site for ATP; it reads DAGNSRIK. Residues Tyr96 and 103 to 106 each bind substrate; that span reads GSDR. Asp105 serves as the catalytic Proton acceptor. Position 129 (Thr129) interacts with ATP. Thr195 is a binding site for substrate.

It belongs to the type III pantothenate kinase family. In terms of assembly, homodimer. It depends on NH4(+) as a cofactor. Requires K(+) as cofactor.

It localises to the cytoplasm. It catalyses the reaction (R)-pantothenate + ATP = (R)-4'-phosphopantothenate + ADP + H(+). Its pathway is cofactor biosynthesis; coenzyme A biosynthesis; CoA from (R)-pantothenate: step 1/5. Functionally, catalyzes the phosphorylation of pantothenate (Pan), the first step in CoA biosynthesis. The protein is Type III pantothenate kinase of Paraburkholderia xenovorans (strain LB400).